The primary structure comprises 495 residues: Internal alternative NAD(P)H-ubiquinone oxidoreductase A1, mitochondrial (495 aa).

The transit peptide at 1 to 41 (MPWFKNLIKISKTITNQSSSYKSITPLASPLLTQFLQFTKQ) directs the protein to the mitochondrion. An FAD-binding site is contributed by 61 to 91 (RIVVLGSGWAGCRLMKDIDTNIYDVVCVSPR). NAD(+) is bound at residue 228-264 (LHCVVVGGGPTGVEFSGELSDFILKDVHQRYAHVKDY). A Microbody targeting signal motif is present at residues 486-495 (LVFGRDISRI).

It belongs to the NADH dehydrogenase family. The cofactor is FAD.

The protein localises to the mitochondrion inner membrane. It is found in the peroxisome. It catalyses the reaction a quinone + NADH + H(+) = a quinol + NAD(+). The enzyme catalyses a ubiquinone + NADH + H(+) = a ubiquinol + NAD(+). Alternative NADH-ubiquinone oxidoreductase which catalyzes the oxidation of mitochondrial NADH does not translocate protons across the inner mitochondrial membrane. The chain is Internal alternative NAD(P)H-ubiquinone oxidoreductase A1, mitochondrial (NDA1) from Solanum tuberosum (Potato).